The sequence spans 348 residues: MAETYRFPRFSHEENGTVEPLPLKTGPDKKAIPHIRIVKVGDPPKHGVRYLDVLLLGFFETPKQGPLSGSISDLTESTSYSICGSGSLPIGIAKYYGTDQELLKACIDLKITVRRTVRSGEMIVYMVDSIHAPLLPWSGRLRQGMIYNANKVALAPQCLPVDKDIRFRVVFVNGTSLGTITIAKVPKTLADLALPNSISVNLLVTLKAGVSTEQKGILPVLDDDGEKKLNFMVHLGIIRRKVGKIYSVEYCKNKIEKMKLIFSLGLVGGISFHVHATGTLSKTLMSQLAWKKAVCYPLMDVNPHMNLVIWAASVEITSVDAVFQPAIPKEFRYYPNVVAKSIGKIRKI.

An intrachain disulfide couples C251 to C295.

The protein belongs to the morbillivirus/respirovirus/rubulavirus M protein family.

The protein resides in the virion. Functionally, the M protein has a crucial role in virus assembly and interacts with the RNP complex as well as with the viral membrane. In Homo sapiens (Human), this protein is Matrix protein (M).